We begin with the raw amino-acid sequence, 160 residues long: D-aminoacyl-tRNA deacylase (160 aa).

Positions 146-147 match the Gly-cisPro motif, important for rejection of L-amino acids motif; the sequence is GP.

This sequence belongs to the DTD family. In terms of assembly, homodimer.

The protein localises to the cytoplasm. The enzyme catalyses glycyl-tRNA(Ala) + H2O = tRNA(Ala) + glycine + H(+). It catalyses the reaction a D-aminoacyl-tRNA + H2O = a tRNA + a D-alpha-amino acid + H(+). Functionally, an aminoacyl-tRNA editing enzyme that deacylates mischarged D-aminoacyl-tRNAs. Also deacylates mischarged glycyl-tRNA(Ala), protecting cells against glycine mischarging by AlaRS. Acts via tRNA-based rather than protein-based catalysis; rejects L-amino acids rather than detecting D-amino acids in the active site. By recycling D-aminoacyl-tRNA to D-amino acids and free tRNA molecules, this enzyme counteracts the toxicity associated with the formation of D-aminoacyl-tRNA entities in vivo and helps enforce protein L-homochirality. The protein is D-aminoacyl-tRNA deacylase of Desulfovibrio desulfuricans (strain ATCC 27774 / DSM 6949 / MB).